Consider the following 184-residue polypeptide: Photosystem I assembly protein Ycf4 (184 aa).

2 helical membrane passes run 22–42 (FCWACILLLGSLGFLLVGISS) and 64–84 (IVMSFYGIAGLFISSYLWSTI).

Belongs to the Ycf4 family.

It is found in the plastid. The protein resides in the chloroplast thylakoid membrane. Seems to be required for the assembly of the photosystem I complex. This chain is Photosystem I assembly protein Ycf4, found in Piper cenocladum (Ant piper).